An 89-amino-acid chain; its full sequence is Small ribosomal subunit protein uS15 (89 aa).

This sequence belongs to the universal ribosomal protein uS15 family. Part of the 30S ribosomal subunit. Forms a bridge to the 50S subunit in the 70S ribosome, contacting the 23S rRNA.

Its function is as follows. One of the primary rRNA binding proteins, it binds directly to 16S rRNA where it helps nucleate assembly of the platform of the 30S subunit by binding and bridging several RNA helices of the 16S rRNA. Functionally, forms an intersubunit bridge (bridge B4) with the 23S rRNA of the 50S subunit in the ribosome. This is Small ribosomal subunit protein uS15 from Pasteurella multocida (strain Pm70).